A 346-amino-acid chain; its full sequence is [LysW]-lysine/[LysW]-ornithine hydrolase (346 aa).

Position 68 (His-68) interacts with Zn(2+). Residue Asp-70 is part of the active site. Residue Asp-92 coordinates Zn(2+). Glu-122 serves as the catalytic Proton acceptor. Zn(2+) is bound by residues Glu-123, Glu-146, and His-317.

The protein belongs to the peptidase M20A family. LysK subfamily. It depends on Zn(2+) as a cofactor. Co(2+) serves as cofactor.

It localises to the cytoplasm. It catalyses the reaction [amino-group carrier protein]-C-terminal-gamma-(L-lysyl)-L-glutamate + H2O = [amino-group carrier protein]-C-terminal-L-glutamate + L-lysine. It carries out the reaction [amino-group carrier protein]-C-terminal-gamma-(L-ornithyl)-L-glutamate + H2O = [amino-group carrier protein]-C-terminal-L-glutamate + L-ornithine. Its pathway is amino-acid biosynthesis; L-lysine biosynthesis via AAA pathway; L-lysine from L-alpha-aminoadipate (Thermus route): step 5/5. It participates in amino-acid biosynthesis; L-arginine biosynthesis. Functionally, catalyzes the release of L-lysine from [LysW]-gamma-L-lysine and the release of L-ornithine from [LysW]-L-ornithine. The polypeptide is [LysW]-lysine/[LysW]-ornithine hydrolase (Saccharolobus solfataricus (strain ATCC 35092 / DSM 1617 / JCM 11322 / P2) (Sulfolobus solfataricus)).